A 345-amino-acid polypeptide reads, in one-letter code: D-amino-acid oxidase (345 aa).

Serine 10, isoleucine 13, serine 49, glycine 53, and asparagine 55 together coordinate FAD. Residues tyrosine 230 and arginine 290 each contribute to the (R)-lactate site. Residues tyrosine 230 and arginine 290 each coordinate anthranilate. FAD-binding residues include arginine 290, serine 317, glycine 320, tyrosine 321, and glutamine 322. Residues 343–345 (AKL) carry the Microbody targeting signal motif.

It belongs to the DAMOX/DASOX family. FAD is required as a cofactor.

The protein localises to the peroxisome matrix. The catalysed reaction is a D-alpha-amino acid + O2 + H2O = a 2-oxocarboxylate + H2O2 + NH4(+). The enzyme catalyses D-methionine + O2 + H2O = 4-methylsulfanyl-2-oxobutanoate + H2O2 + NH4(+). Its function is as follows. Catalyzes the oxidative deamination of D-amino acids with broad substrate specificity. Enables the organism to utilize D-amino acids as a source of nutrients. Enables the organism to utilize D-alanine as a nitrogen source, although it is not strictly required for this process. Also enables utilization of D-alanine as a carbon source. This chain is D-amino-acid oxidase, found in Candida boidinii (Yeast).